Reading from the N-terminus, the 106-residue chain is Large ribosomal subunit protein eL42 (106 aa).

This sequence belongs to the eukaryotic ribosomal protein eL42 family.

The polypeptide is Large ribosomal subunit protein eL42 (RPL44) (Yarrowia lipolytica (strain CLIB 122 / E 150) (Yeast)).